Here is a 279-residue protein sequence, read N- to C-terminus: Protein phosphatase 1 regulatory subunit 3E (279 aa).

Phosphoserine occurs at positions 16 and 33. The disordered stretch occupies residues 28 to 87; that stretch reads RSQRPSLEEESEEEPGEGGTRPGARSRAHVPGRGRRARSAPAGGGGARTARSRSPDTRKR. Basic residues predominate over residues 51–65; that stretch reads ARSRAHVPGRGRRAR. Position 66 is a phosphoserine (serine 66). Positions 87-90 match the PP1-binding motif motif; sequence RVRF. Residues 154–259 form the CBM21 domain; that stretch reads AARLQAQRIC…NNGGRDYALL (106 aa). The segment at 176–198 is glycogen-binding motif; the sequence is GSARVLDLAYEKRVSVRWSADGW. The segment at 248-256 is substrate-binding motif; it reads WDNNGGRDY.

Acts as a glycogen-targeting subunit for PP1. PP1 is involved in glycogen metabolism and contributes to the activation of glycogen synthase leading to an increase in glycogen synthesis. The sequence is that of Protein phosphatase 1 regulatory subunit 3E (Ppp1r3e) from Mus musculus (Mouse).